The following is a 181-amino-acid chain: Inner membrane-spanning protein YciB (181 aa).

A run of 5 helical transmembrane segments spans residues 8–28, 53–73, 76–96, 121–141, and 149–169; these read FPIICFFVAYKFWGIYIATAA, ITLIFILLLGSFTLVFHNAIF, WKPTIVYWIFAIVLFGSHFFG, LSWALFFLILGVLNLFVVYNF, and FKLFGTLVLTLVFILGQAFYI.

Belongs to the YciB family.

It localises to the cell inner membrane. Functionally, plays a role in cell envelope biogenesis, maintenance of cell envelope integrity and membrane homeostasis. This Coxiella burnetii (strain RSA 331 / Henzerling II) protein is Inner membrane-spanning protein YciB.